The following is a 94-amino-acid chain: Large ribosomal subunit protein bL25 (94 aa).

This sequence belongs to the bacterial ribosomal protein bL25 family. Part of the 50S ribosomal subunit; part of the 5S rRNA/L5/L18/L25 subcomplex. Contacts the 5S rRNA. Binds to the 5S rRNA independently of L5 and L18.

This is one of the proteins that binds to the 5S RNA in the ribosome where it forms part of the central protuberance. This Shigella boydii serotype 18 (strain CDC 3083-94 / BS512) protein is Large ribosomal subunit protein bL25.